A 2311-amino-acid polypeptide reads, in one-letter code: C2 domain-containing protein 3 (2311 aa).

Disordered regions lie at residues Ser-447–Cys-511 and Gly-543–Arg-562. Residues Ile-470–Ser-509 show a composition bias toward basic and acidic residues. C2 domains are found at residues Thr-508–Cys-666, Gly-751–Leu-888, Leu-952–Asp-1112, Pro-1136–Tyr-1303, His-1370–Val-1505, and Lys-1581–Tyr-1713. The disordered stretch occupies residues Gly-939–Pro-964. Disordered regions lie at residues Pro-1536 to Ala-1589, Ser-1955 to Asn-1977, Met-2036 to Pro-2065, Asn-2084 to Leu-2233, and Val-2261 to Glu-2292. Composition is skewed to basic and acidic residues over residues Phe-1565–Ala-1589 and Ser-1955–Arg-1964. Residues Met-2036–Leu-2047 are compositionally biased toward polar residues. The segment covering Ser-2048–Gln-2059 has biased composition (basic and acidic residues). Positions Asn-2084–Ser-2095 are enriched in polar residues. The segment covering Ala-2138–Pro-2151 has biased composition (acidic residues). A compositionally biased stretch (polar residues) spans Gly-2221–Leu-2233.

It is found in the cytoplasm. It localises to the cytoskeleton. The protein localises to the cilium basal body. Its subcellular location is the microtubule organizing center. The protein resides in the centrosome. It is found in the centriole. In terms of biological role, component of the centrioles that acts as a positive regulator of centriole elongation. Promotes assembly of centriolar distal appendage, a structure at the distal end of the mother centriole that acts as an anchor of the cilium. Required for primary cilium formation. The protein is C2 domain-containing protein 3 (c2cd3) of Xenopus tropicalis (Western clawed frog).